The following is a 197-amino-acid chain: GTP cyclohydrolase-2 (197 aa).

Position 49-53 (49-53) interacts with GTP; it reads RVHSE. Zn(2+)-binding residues include cysteine 54, cysteine 65, and cysteine 67. GTP contacts are provided by residues glutamine 70, 92 to 94, and threonine 114; that span reads EGR. The active-site Proton acceptor is aspartate 126. Residue arginine 128 is the Nucleophile of the active site. Threonine 149 and lysine 154 together coordinate GTP.

It belongs to the GTP cyclohydrolase II family. Homodimer. The cofactor is Zn(2+).

The enzyme catalyses GTP + 4 H2O = 2,5-diamino-6-hydroxy-4-(5-phosphoribosylamino)-pyrimidine + formate + 2 phosphate + 3 H(+). It participates in cofactor biosynthesis; riboflavin biosynthesis; 5-amino-6-(D-ribitylamino)uracil from GTP: step 1/4. In terms of biological role, catalyzes the conversion of GTP to 2,5-diamino-6-ribosylamino-4(3H)-pyrimidinone 5'-phosphate (DARP), formate and pyrophosphate. The polypeptide is GTP cyclohydrolase-2 (Cronobacter sakazakii (strain ATCC BAA-894) (Enterobacter sakazakii)).